We begin with the raw amino-acid sequence, 103 residues long: Glycoprotein 24B (103 aa).

It belongs to the csb family. O-glycosylated.

The protein resides in the cell surface. In terms of biological role, cell-cell adhesion during early development. The polypeptide is Glycoprotein 24B (csbB) (Dictyostelium discoideum (Social amoeba)).